The chain runs to 200 residues: ATP synthase subunit delta', mitochondrial (200 aa).

Residues 1–21 (MFRHSSRLLARATTMGWRRPF) constitute a mitochondrion transit peptide.

It belongs to the ATPase epsilon chain family. As to quaternary structure, F-type ATPases have 2 components, CF(1) - the catalytic core - and CF(0) - the membrane proton channel. CF(1) has five subunits: alpha(3), beta(3), gamma(1), delta(1), epsilon(1). CF(0) has three main subunits: a, b and c.

It localises to the mitochondrion. The protein localises to the mitochondrion inner membrane. In terms of biological role, mitochondrial membrane ATP synthase (F(1)F(0) ATP synthase or Complex V) produces ATP from ADP in the presence of a proton gradient across the membrane which is generated by electron transport complexes of the respiratory chain. F-type ATPases consist of two structural domains, F(1) - containing the extramembraneous catalytic core, and F(0) - containing the membrane proton channel, linked together by a central stalk and a peripheral stalk. During catalysis, ATP turnover in the catalytic domain of F(1) is coupled via a rotary mechanism of the central stalk subunits to proton translocation. Part of the complex F(1) domain and of the central stalk which is part of the complex rotary element. Rotation of the central stalk against the surrounding alpha(3)beta(3) subunits leads to hydrolysis of ATP in three separate catalytic sites on the beta subunits. This is ATP synthase subunit delta', mitochondrial from Ipomoea batatas (Sweet potato).